We begin with the raw amino-acid sequence, 1261 residues long: AT-rich interactive domain-containing protein 4A (1261 aa).

Residues 4-121 (ADEPAYLTVG…RHFAESETLD (118 aa)) are DNA-binding. Disordered regions lie at residues 142-169 (RGRR…DKRR), 273-310 (ESSS…LDPE), and 435-470 (APEM…PRGR). Composition is skewed to acidic residues over residues 151–165 (TEDE…EEDE) and 276–289 (SSDD…EHEE). Basic and acidic residues predominate over residues 290–299 (EKEKEAKKEE). Residues 300–310 (EELPEEELDPE) are compositionally biased toward acidic residues. The region spanning 309–401 (PEERDNFLQQ…YLYGFEEYCR (93 aa)) is the ARID domain. Residue Lys-481 forms a Glycyl lysine isopeptide (Lys-Gly) (interchain with G-Cter in SUMO2) linkage. Disordered stretches follow at residues 498–582 (LENK…GTKV), 633–768 (WPLD…EAGD), and 842–953 (FSST…EDAM). The segment covering 512-522 (PAAKREHELLF) has biased composition (basic and acidic residues). Residues 526–536 (STPKNKEKKIK) show a composition bias toward basic residues. Acidic residues predominate over residues 541–551 (SERDSDEEEEK). The span at 552 to 564 (SQEREETESRCDS) shows a compositional bias: basic and acidic residues. Acidic residues predominate over residues 565–574 (EGEDEEDDTE). The Tudor-knot domain maps to 579 to 631 (GTKVKVKYGRGKTQKIYEASIKSTEMDDGEILYLVHYYGWNVRYDEWVKADRI). Over residues 640 to 649 (PKKKQKKKVK) the composition is skewed to basic residues. Over residues 650 to 665 (NKEDSEKDEKRDEERQ) the composition is skewed to basic and acidic residues. Positions 676-689 (STFSPNMPYSLSKT) are enriched in polar residues. Position 679 is a phosphoserine (Ser-679). Residues 690-702 (SNSEGKSDSCSSD) are compositionally biased toward low complexity. Positions 708–753 (QLEKSSGGEDLSPDVKEELEKNENAHDDKLDEENPKIVHISKENDR) are enriched in basic and acidic residues. Ser-719 carries the post-translational modification Phosphoserine. Glycyl lysine isopeptide (Lys-Gly) (interchain with G-Cter in SUMO2) cross-links involve residues Lys-723 and Lys-743. Phosphoserine is present on Ser-867. Composition is skewed to basic and acidic residues over residues 899–909 (KGAHVEQHFET) and 929–947 (TSEK…TPLK). The retinoblastoma protein binding stretch occupies residues 955 to 968 (LIGPETLVCHEVDL). Residues 1067–1080 (HERESREKGQKRPS) show a composition bias toward basic and acidic residues. Disordered stretches follow at residues 1067–1173 (HERE…RTYK) and 1216–1261 (RRRK…VECR). 2 positions are modified to phosphoserine: Ser-1113 and Ser-1149. The segment covering 1230 to 1252 (HAGASMSSASSDTGMSPSSSSPP) has biased composition (low complexity).

In terms of assembly, identified in mSin3A corepressor complexes together with SIN3A, SIN3B, RBBP4, RBBP7, SAP30, BRMS1, HDAC1 and HDAC2. Interacts with BRMS1. Interacts with RB1. Interacts with ARID4B. Interacts with AR. As to expression, expressed in Sertoli cells of the testis.

It localises to the nucleus. Functionally, DNA-binding protein which modulates activity of several transcription factors including RB1 (retinoblastoma-associated protein) and AR (androgen receptor). May function as part of an mSin3A repressor complex. Has no intrinsic transcriptional activity. Plays a role in the regulation of epigenetic modifications at the PWS/AS imprinting center near the SNRPN promoter, where it might function as part of a complex with RB1 and ARID4B. Involved in spermatogenesis, together with ARID4B, where it acts as a transcriptional coactivator for AR and enhances expression of genes required for sperm maturation. Regulates expression of the tight junction protein CLDN3 in the testis, which is important for integrity of the blood-testis barrier. Plays a role in myeloid homeostasis where it regulates the histone methylation state of bone marrow cells and expression of various genes involved in hematopoiesis. May function as a leukemia suppressor. The chain is AT-rich interactive domain-containing protein 4A from Mus musculus (Mouse).